Consider the following 354-residue polypeptide: Cyclin-D1-2 (354 aa).

Disordered stretches follow at residues 37–74 (FFQQ…EEEE) and 331–354 (TTAT…RRKM). 2 stretches are compositionally biased toward low complexity: residues 44–66 (PAPA…AGSC) and 331–346 (TTAT…VSSS).

It belongs to the cyclin family. Cyclin D subfamily.

The chain is Cyclin-D1-2 (CYCD1-2) from Oryza sativa subsp. japonica (Rice).